The sequence spans 243 residues: Eukaryotic translation initiation factor 4E-2 (243 aa).

This sequence belongs to the eukaryotic initiation factor 4E family. As to quaternary structure, eIF4F is a multi-subunit complex, the composition of which varies with external and internal environmental conditions. It is composed of at least eIF4A, eIF4E and eIF4G. eIF4E is also known to interact with other partners.

Functionally, recognizes and binds the 7-methylguanosine-containing mRNA cap during an early step in the initiation of protein synthesis and facilitates ribosome binding by inducing the unwinding of the mRNAs secondary structures. The sequence is that of Eukaryotic translation initiation factor 4E-2 (tif452) from Schizosaccharomyces pombe (strain 972 / ATCC 24843) (Fission yeast).